A 337-amino-acid polypeptide reads, in one-letter code: uncharacterized protein (337 aa).

A compositionally biased stretch (acidic residues) spans 1 to 11 (MSEIEEEEEEG). A disordered region spans residues 1–20 (MSEIEEEEEEGSASAITGSR). S2 bears the N-acetylserine mark. Residues 50 to 130 (ALSTRVSALE…LQRDVSKLEG (81 aa)) adopt a coiled-coil conformation. The tract at residues 139–242 (LQDDDQNAGT…PISPRRHSVS (104 aa)) is disordered. A compositionally biased stretch (low complexity) spans 170–182 (SSIQSQQASEAIE). Positions 197–211 (LSASLPLVSQTTTPR) are enriched in polar residues. Position 213 is a phosphothreonine (T213). S217 carries the phosphoserine modification. Polar residues predominate over residues 223-233 (ASGTPKTTSRP). Phosphothreonine is present on T226. At S235 the chain carries Phosphoserine.

This is an uncharacterized protein from Arabidopsis thaliana (Mouse-ear cress).